The chain runs to 154 residues: Myoglobin (154 aa).

The 147-residue stretch at 2 to 148 (GLSDQEWQQV…FRNDMASKYK (147 aa)) folds into the Globin domain. H65 provides a ligand contact to nitrite. O2 is bound at residue H65. H94 contacts heme b.

It belongs to the globin family. Monomeric.

Its subcellular location is the cytoplasm. It is found in the sarcoplasm. It carries out the reaction Fe(III)-heme b-[protein] + nitric oxide + H2O = Fe(II)-heme b-[protein] + nitrite + 2 H(+). The catalysed reaction is H2O2 + AH2 = A + 2 H2O. Functionally, monomeric heme protein which primary function is to store oxygen and facilitate its diffusion within muscle tissues. Reversibly binds oxygen through a pentacoordinated heme iron and enables its timely and efficient release as needed during periods of heightened demand. Depending on the oxidative conditions of tissues and cells, and in addition to its ability to bind oxygen, it also has a nitrite reductase activity whereby it regulates the production of bioactive nitric oxide. Under stress conditions, like hypoxia and anoxia, it also protects cells against reactive oxygen species thanks to its pseudoperoxidase activity. The chain is Myoglobin (MB) from Gallus gallus (Chicken).